Reading from the N-terminus, the 592-residue chain is N-acetyltransferase ESCO2 (592 aa).

2 positions are modified to phosphoserine: Ser-41 and Ser-85. The tract at residues 267–294 is disordered; sequence KSSVKVQNARSKNEEKLRKNPSGAVVSS. Ser-309 carries the post-translational modification Phosphoserine. Residues 384 to 408 form a CCHH-type zinc finger; that stretch reads TVCKSCGMIYTASNPEDEIQHLQHH.

This sequence belongs to the acetyltransferase family. ECO subfamily.

The protein resides in the nucleus. It localises to the chromosome. The enzyme catalyses L-lysyl-[protein] + acetyl-CoA = N(6)-acetyl-L-lysyl-[protein] + CoA + H(+). Acetyltransferase required for the establishment of sister chromatid cohesion. Couples the processes of cohesion and DNA replication to ensure that only sister chromatids become paired together. In contrast to the structural cohesins, the deposition and establishment factors are required only during the S phase. Acetylates the cohesin component SMC3. This chain is N-acetyltransferase ESCO2 (Esco2), found in Mus musculus (Mouse).